We begin with the raw amino-acid sequence, 241 residues long: uncharacterized protein (241 aa).

The region spanning 32-86 is the HTH cro/C1-type domain; that stretch reads LKKWRNLFNIQQIELAKYLNVSPSVISDYEVGRRKNPGVNIIKKYVLALIEIDKE. The H-T-H motif DNA-binding region spans 43-62; it reads QIELAKYLNVSPSVISDYEV.

This is an uncharacterized protein from Methanocaldococcus jannaschii (strain ATCC 43067 / DSM 2661 / JAL-1 / JCM 10045 / NBRC 100440) (Methanococcus jannaschii).